We begin with the raw amino-acid sequence, 1030 residues long: ATPase MORC2A (1030 aa).

Alanine 2 is subject to N-acetylalanine. Residues asparagine 39, 87–89, and 99–105 each bind ATP; these read SAK and QYGNGLK. Residue asparagine 39 coordinates Mg(2+). The stretch at 285-362 forms a coiled coil; sequence KTRAEQEVKK…KDAKQRALKE (78 aa). Lysine 427 provides a ligand contact to ATP. Residues 490–544 form a CW-type zinc finger; it reads AMEIPTTIQCDLCLKWRTLPFQLSSVETDYPDTWVCSMNPDPEQDRCEASEQKQK. Cysteine 499, cysteine 502, cysteine 525, and cysteine 536 together coordinate Zn(2+). The interval 530–791 is disordered; sequence DPEQDRCEAS…HPAELRKAQK (262 aa). Basic and acidic residues-rich tracts occupy residues 532 to 543 and 550 to 577; these read EQDRCEASEQKQ and LKKD…KLEA. Residues 555-583 adopt a coiled-coil conformation; it reads KTQEEKQKQLTEKIRQQQEKLEALQKTTP. At threonine 582 the chain carries Phosphothreonine. Position 614 is a phosphoserine (serine 614). Polar residues predominate over residues 629–646; the sequence is PSIQTPRPSTQLRKTSVI. Residues lysine 650 and lysine 702 each participate in a glycyl lysine isopeptide (Lys-Gly) (interchain with G-Cter in SUMO2) cross-link. Residues 693–702 show a composition bias toward low complexity; sequence PPLSLIPSSK. Serine 703 bears the Phosphoserine mark. Lysine 714 is covalently cross-linked (Glycyl lysine isopeptide (Lys-Gly) (interchain with G-Cter in SUMO2)). A Phosphoserine modification is found at serine 728. Threonine 731 is modified (phosphothreonine). A phosphoserine mark is found at serine 737 and serine 741. A coiled-coil region spans residues 738–775; that stretch reads LAVSDEEEAEEEAEKRRERCKRGKLAVKEEKKEANELS. Over residues 763-772 the composition is skewed to basic and acidic residues; the sequence is AVKEEKKEAN. Residue lysine 765 forms a Glycyl lysine isopeptide (Lys-Gly) (interchain with G-Cter in SUMO2) linkage. Phosphoserine occurs at positions 775 and 777. Over residues 779 to 791 the composition is skewed to basic and acidic residues; sequence GEDHPAELRKAQK. Lysine 817 is covalently cross-linked (Glycyl lysine isopeptide (Lys-Gly) (interchain with G-Cter in SUMO2)). Position 834 is a phosphothreonine (threonine 834). Residues 837-849 are compositionally biased toward basic and acidic residues; the sequence is DRWVEKGSEDVRL. 2 disordered regions span residues 837–874 and 882–901; these read DRWV…EAMV and PEPS…ATSP. Phosphoserine is present on residues serine 854 and serine 859. The segment covering 856–865 has biased composition (polar residues); sequence EHQSPDTQQE. Residue lysine 930 forms a Glycyl lysine isopeptide (Lys-Gly) (interchain with G-Cter in SUMO2) linkage. Positions 966-1011 form a coiled coil; sequence RADSRAKASEESLRTSEKKLRETEEKLQKLRTNIVALLQKVQEDID.

Homodimerizes upon ATP-binding and dissociate upon ATP hydrolysis; homodimerization is required for gene silencing. Binds histone H3 independently of the methylation status at 'Lys-9'. Interacts with HDAC4. Interacts with FAM208A/TASOR and MPHOSPH8; the interactions associate MORC2 with the HUSH complex which recruits MORC2 to heterochromatic loci. Interacts with Morc2b. Phosphorylated by PAK1 at Ser-737 upon DNA damage. Phosphorylation is required for ATPase activity and recruitment to damaged chromatin. Expressed in the axons and Schwann cells of peripheral nerves. Expressed in testes.

The protein localises to the nucleus. The protein resides in the cytoplasm. Its subcellular location is the cytosol. It is found in the chromosome. It localises to the nucleus matrix. It carries out the reaction ATP + H2O = ADP + phosphate + H(+). ATPase activity is dependent of phosphorylation by PAK1 and presence of DNA. In terms of biological role, essential for epigenetic silencing by the HUSH complex. Recruited by HUSH to target site in heterochromatin, the ATPase activity and homodimerization are critical for HUSH-mediated silencing. Represses germ cell-related genes and L1 retrotransposons in collaboration with SETDB1 and the HUSH complex, the silencing is dependent of repressive epigenetic modifications, such as H3K9me3 mark. Silencing events often occur within introns of transcriptionally active genes, and lead to the down-regulation of host gene expression. During DNA damage response, regulates chromatin remodeling through ATP hydrolysis. During DNA damage response, may regulate chromatin remodeling through ATP hydrolysis. This Mus musculus (Mouse) protein is ATPase MORC2A.